Reading from the N-terminus, the 273-residue chain is Giardin subunit beta (273 aa).

The interval 1–19 (MSMFTSTRTLTQTMDKPDD) is nonhelical region. The tract at residues 20-273 (LTRSATETAV…GGLSMVTKHQ (254 aa)) is rod. Coiled coils occupy residues 123 to 175 (DTLN…YDQL) and 211 to 263 (NTKL…SKIQ).

Belongs to the SF-assemblin family. In terms of assembly, interacts with BOP1 (via C-terminal WD repeats).

It localises to the cytoplasm. The protein localises to the cytoskeleton. Its function is as follows. Giardins are involved in parasite attachment to the intestinal mucosa and in the cytoskeletal disassembly and reassembly that marks the transition from infectious trophozoite to transmissible cyst. They may interact with other cytoskeletal proteins such as microtubules in the microribbons or crossbridges, to maintain the integrity of the ventral disk. This is Giardin subunit beta from Giardia intestinalis (Giardia lamblia).